A 519-amino-acid chain; its full sequence is Glutamate--cysteine ligase (519 aa).

It belongs to the glutamate--cysteine ligase type 1 family. Type 1 subfamily.

It catalyses the reaction L-cysteine + L-glutamate + ATP = gamma-L-glutamyl-L-cysteine + ADP + phosphate + H(+). It participates in sulfur metabolism; glutathione biosynthesis; glutathione from L-cysteine and L-glutamate: step 1/2. The sequence is that of Glutamate--cysteine ligase from Edwardsiella ictaluri (strain 93-146).